The primary structure comprises 28 residues: Conotoxin Cl6a (28 aa).

Disulfide bonds link Cys3-Cys13, Cys7-Cys19, and Cys12-Cys24.

Expressed by the venom duct.

Its subcellular location is the secreted. The chain is Conotoxin Cl6a from Californiconus californicus (California cone).